Here is a 265-residue protein sequence, read N- to C-terminus: S-antigen protein (265 aa).

The first 23 residues, M1–G23, serve as a signal peptide directing secretion. Positions D59 to I265 are disordered. The span at L60–G86 shows a compositional bias: acidic residues. 12 repeat units span residues P97–D107, P108–D118, P119–D129, P130–D140, P141–D151, P152–D162, P163–D173, P174–D184, P185–D195, P196–D206, P207–D217, and P218–D228. Residues P97–G239 are 13 X 11 AA approximate tandem repeats of P-A-K-A-S-Q-G-G-L-E-D. A 13; approximate repeat occupies P229–G239. Over residues G239–I257 the composition is skewed to basic and acidic residues.

It is found in the parasitophorous vacuole. S antigens are soluble heat-stable proteins present in the sera of some infected individuals. The sequence is that of S-antigen protein from Plasmodium falciparum (isolate FC27 / Papua New Guinea).